The primary structure comprises 210 residues: Acetoin utilization protein AcuA (210 aa).

The region spanning 20–161 is the N-acetyltransferase domain; sequence LIEGPVSPED…YRKIMEKMMN (142 aa).

The protein belongs to the acetyltransferase family. As to quaternary structure, monomer.

It participates in ketone degradation; acetoin degradation. With respect to regulation, activity is sensitive to salt concentration, a high concentration of KCL (500 mM) is needed for complete inactivation. In terms of biological role, part of the acuABC operon, which is possibly involved in the breakdown of acetoin and butanediol. Acts as an acetyltransferase inactivating acetyl-CoA synthetase AcsA via acetylation at a Lys residue. This is Acetoin utilization protein AcuA (acuA) from Bacillus subtilis (strain 168).